The chain runs to 239 residues: 1-(5-phosphoribosyl)-5-[(5-phosphoribosylamino)methylideneamino] imidazole-4-carboxamide isomerase (239 aa).

Aspartate 9 functions as the Proton acceptor in the catalytic mechanism. The active-site Proton donor is the aspartate 131.

It belongs to the HisA/HisF family.

The protein localises to the cytoplasm. The enzyme catalyses 1-(5-phospho-beta-D-ribosyl)-5-[(5-phospho-beta-D-ribosylamino)methylideneamino]imidazole-4-carboxamide = 5-[(5-phospho-1-deoxy-D-ribulos-1-ylimino)methylamino]-1-(5-phospho-beta-D-ribosyl)imidazole-4-carboxamide. It participates in amino-acid biosynthesis; L-histidine biosynthesis; L-histidine from 5-phospho-alpha-D-ribose 1-diphosphate: step 4/9. In Phocaeicola vulgatus (strain ATCC 8482 / DSM 1447 / JCM 5826 / CCUG 4940 / NBRC 14291 / NCTC 11154) (Bacteroides vulgatus), this protein is 1-(5-phosphoribosyl)-5-[(5-phosphoribosylamino)methylideneamino] imidazole-4-carboxamide isomerase.